The sequence spans 190 residues: Nodulation protein L (190 aa).

Belongs to the transferase hexapeptide repeat family.

Functionally, acetyltransferase implicated in the O-acetylation of Nod factors. This Rhizobium leguminosarum bv. viciae protein is Nodulation protein L (nodL).